The sequence spans 21 residues: Outer membrane protein A (21 aa).

A beta stranded transmembrane segment spans residues 6 to 16 (TWYTGAKLGWS).

The protein belongs to the outer membrane OOP (TC 1.B.6) superfamily. OmpA family. As to quaternary structure, monomer and homodimer.

Its subcellular location is the cell outer membrane. Functionally, with TolR probably plays a role in maintaining the position of the peptidoglycan cell wall in the periplasm. Acts as a porin with low permeability that allows slow penetration of small solutes; an internal gate slows down solute passage. This is Outer membrane protein A from Actinobacillus lignieresii.